We begin with the raw amino-acid sequence, 759 residues long: Polyribonucleotide nucleotidyltransferase (759 aa).

Mg(2+) is bound by residues D522 and D528. The 60-residue stretch at 588 to 647 (PRITTIKVPVDKIGEVIGPKGKMINSITEETGASISIEDDGTVFVGASNGEAAQAAIDKI) folds into the KH domain. Residues 659-728 (GERFLGTVVK…NRGKISLVLV (70 aa)) enclose the S1 motif domain. A disordered region spans residues 734-759 (AEASDNGSATPSDKAPATADATTAGN). Positions 741-759 (SATPSDKAPATADATTAGN) are enriched in low complexity.

The protein belongs to the polyribonucleotide nucleotidyltransferase family. It depends on Mg(2+) as a cofactor.

It localises to the cytoplasm. The catalysed reaction is RNA(n+1) + phosphate = RNA(n) + a ribonucleoside 5'-diphosphate. Functionally, involved in mRNA degradation. Catalyzes the phosphorolysis of single-stranded polyribonucleotides processively in the 3'- to 5'-direction. The protein is Polyribonucleotide nucleotidyltransferase of Mycobacterium sp. (strain JLS).